The primary structure comprises 146 residues: Hemoglobin subunit beta-1 (146 aa).

Positions 2–146 constitute a Globin domain; it reads HWTAEEKQLI…VAHALARRYH (145 aa). Residues histidine 63 and histidine 92 each contribute to the heme b site.

It belongs to the globin family. In terms of assembly, heterotetramer of two alpha chains and two beta chains. In terms of tissue distribution, red blood cells.

Its function is as follows. Involved in oxygen transport from the lung to the various peripheral tissues. The sequence is that of Hemoglobin subunit beta-1 (HBB1) from Iguana iguana (Common iguana).